The primary structure comprises 423 residues: Salicylate 5-hydroxylase, large oxygenase component (423 aa).

Residues 1-20 form a disordered region; that stretch reads MSEPQRLKPVFPQDPKWPGE. A Rieske domain is found at 49–168; it reads WCYVGLEAEI…VAARGGAVFA (120 aa). 4 residues coordinate [2Fe-2S] cluster: Cys-91, His-93, Cys-111, and His-114. Fe cation contacts are provided by His-224, His-229, and Asp-370.

It belongs to the bacterial ring-hydroxylating dioxygenase alpha subunit family. As to quaternary structure, the salicylate 5-hydroxylase (S5H) multicomponent enzyme system is composed of an electron transfer component and an oxygenase component. The electron transfer component is comprised of a ferredoxin reductase (NagAa) and a ferredoxin (NagAb), and the oxygenase component is formed by a large subunit (NagG) and a small subunit (NagH). It depends on Fe cation as a cofactor. The cofactor is [2Fe-2S] cluster.

The catalysed reaction is salicylate + NADH + O2 + H(+) = 2,5-dihydroxybenzoate + NAD(+) + H2O. The protein operates within aromatic compound metabolism; naphthalene degradation. Its function is as follows. Oxygenase component of the salicylate 5-hydroxylase (S5H) multicomponent enzyme system which catalyzes the 5-hydroxylation of salicylate to gentisate. Active only on substrates with a ring-substituted carboxylate group with an adjacent hydroxyl group. Primarily active against salicylate and substituted salicylates, but not against 2-hydroxycinnamate, 3-hydroxycinnamate, 2-hydroxyphenylacetate, 3-hydroxyphenylacetate, 2-hydroxybenzophenone, 1-hydroxy-2-naphthoate, 4-methoxysalicylate or 2-hydroxyacetophenone. The sequence is that of Salicylate 5-hydroxylase, large oxygenase component from Ralstonia sp.